The following is a 244-amino-acid chain: 3-deoxy-manno-octulosonate cytidylyltransferase (244 aa).

This sequence belongs to the KdsB family.

It is found in the cytoplasm. It catalyses the reaction 3-deoxy-alpha-D-manno-oct-2-ulosonate + CTP = CMP-3-deoxy-beta-D-manno-octulosonate + diphosphate. Its pathway is nucleotide-sugar biosynthesis; CMP-3-deoxy-D-manno-octulosonate biosynthesis; CMP-3-deoxy-D-manno-octulosonate from 3-deoxy-D-manno-octulosonate and CTP: step 1/1. It functions in the pathway bacterial outer membrane biogenesis; lipopolysaccharide biosynthesis. Functionally, activates KDO (a required 8-carbon sugar) for incorporation into bacterial lipopolysaccharide in Gram-negative bacteria. The chain is 3-deoxy-manno-octulosonate cytidylyltransferase from Wolinella succinogenes (strain ATCC 29543 / DSM 1740 / CCUG 13145 / JCM 31913 / LMG 7466 / NCTC 11488 / FDC 602W) (Vibrio succinogenes).